The following is a 100-amino-acid chain: Large ribosomal subunit protein bL21 (100 aa).

The protein belongs to the bacterial ribosomal protein bL21 family. In terms of assembly, part of the 50S ribosomal subunit. Contacts protein L20.

In terms of biological role, this protein binds to 23S rRNA in the presence of protein L20. The chain is Large ribosomal subunit protein bL21 from Mycoplasmopsis synoviae (strain 53) (Mycoplasma synoviae).